Here is a 238-residue protein sequence, read N- to C-terminus: ATP-dependent dethiobiotin synthetase BioD (238 aa).

Residue 12–17 (GVGKTV) participates in ATP binding. Threonine 16 contributes to the Mg(2+) binding site. Lysine 37 is an active-site residue. Threonine 41 lines the substrate pocket. Residues aspartate 50, 109-112 (EGAG), 170-171 (GS), and 200-202 (PAG) each bind ATP. Residues aspartate 50 and glutamate 109 each coordinate Mg(2+).

Belongs to the dethiobiotin synthetase family. As to quaternary structure, homodimer. Mg(2+) is required as a cofactor.

The protein localises to the cytoplasm. It catalyses the reaction (7R,8S)-7,8-diammoniononanoate + CO2 + ATP = (4R,5S)-dethiobiotin + ADP + phosphate + 3 H(+). It functions in the pathway cofactor biosynthesis; biotin biosynthesis; biotin from 7,8-diaminononanoate: step 1/2. Functionally, catalyzes a mechanistically unusual reaction, the ATP-dependent insertion of CO2 between the N7 and N8 nitrogen atoms of 7,8-diaminopelargonic acid (DAPA, also called 7,8-diammoniononanoate) to form a ureido ring. The protein is ATP-dependent dethiobiotin synthetase BioD of Frankia casuarinae (strain DSM 45818 / CECT 9043 / HFP020203 / CcI3).